An 80-amino-acid chain; its full sequence is Cell division protein ZapB (80 aa).

Residues 3-80 are a coiled coil; that stretch reads LEILEQLEAK…GLLGKMDEVE (78 aa). Residues 41 to 60 form a disordered region; sequence LEQANNGRSEVEQEAQRARD. Residues 49 to 60 are compositionally biased toward basic and acidic residues; it reads SEVEQEAQRARD.

This sequence belongs to the ZapB family. As to quaternary structure, homodimer. The ends of the coiled-coil dimer bind to each other, forming polymers. Interacts with FtsZ.

The protein localises to the cytoplasm. Functionally, non-essential, abundant cell division factor that is required for proper Z-ring formation. It is recruited early to the divisome by direct interaction with FtsZ, stimulating Z-ring assembly and thereby promoting cell division earlier in the cell cycle. Its recruitment to the Z-ring requires functional FtsA or ZipA. The sequence is that of Cell division protein ZapB from Aliivibrio fischeri (strain ATCC 700601 / ES114) (Vibrio fischeri).